The chain runs to 404 residues: Phosphoglycerate kinase (404 aa).

Substrate is bound by residues 26 to 28 (DFN), Arg-41, 64 to 67 (HLGR), Arg-124, and Arg-161. ATP-binding positions include Lys-212, Gly-301, Glu-332, and 359-362 (GGDS).

It belongs to the phosphoglycerate kinase family. In terms of assembly, monomer.

Its subcellular location is the cytoplasm. It carries out the reaction (2R)-3-phosphoglycerate + ATP = (2R)-3-phospho-glyceroyl phosphate + ADP. Its pathway is carbohydrate degradation; glycolysis; pyruvate from D-glyceraldehyde 3-phosphate: step 2/5. The protein is Phosphoglycerate kinase of Mesomycoplasma hyopneumoniae (strain 232) (Mycoplasma hyopneumoniae).